The primary structure comprises 281 residues: Undecaprenyl-diphosphatase (281 aa).

Helical transmembrane passes span 2-22 (FDLI…FLPV), 46-66 (AFSS…VIQL), 93-113 (VIVG…FMDA), 115-135 (LMNF…FIVI), 152-172 (ITFK…VPGT), 190-210 (FVAA…VTFL), 228-248 (IVML…IKFM), and 259-279 (VFGY…ILGI).

It belongs to the UppP family.

The protein resides in the cell membrane. The enzyme catalyses di-trans,octa-cis-undecaprenyl diphosphate + H2O = di-trans,octa-cis-undecaprenyl phosphate + phosphate + H(+). Catalyzes the dephosphorylation of undecaprenyl diphosphate (UPP). Confers resistance to bacitracin. The protein is Undecaprenyl-diphosphatase of Leuconostoc mesenteroides subsp. mesenteroides (strain ATCC 8293 / DSM 20343 / BCRC 11652 / CCM 1803 / JCM 6124 / NCDO 523 / NBRC 100496 / NCIMB 8023 / NCTC 12954 / NRRL B-1118 / 37Y).